The following is a 247-amino-acid chain: 6-phosphogluconolactonase (247 aa).

The protein belongs to the glucosamine/galactosamine-6-phosphate isomerase family. 6-phosphogluconolactonase subfamily.

The catalysed reaction is 6-phospho-D-glucono-1,5-lactone + H2O = 6-phospho-D-gluconate + H(+). It participates in carbohydrate degradation; pentose phosphate pathway; D-ribulose 5-phosphate from D-glucose 6-phosphate (oxidative stage): step 2/3. Hydrolysis of 6-phosphogluconolactone to 6-phosphogluconate. The polypeptide is 6-phosphogluconolactonase (pgl) (Mycobacterium leprae (strain TN)).